Consider the following 117-residue polypeptide: Ribosome-binding factor A (117 aa).

It belongs to the RbfA family. Monomer. Binds 30S ribosomal subunits, but not 50S ribosomal subunits or 70S ribosomes.

The protein resides in the cytoplasm. Its function is as follows. One of several proteins that assist in the late maturation steps of the functional core of the 30S ribosomal subunit. Associates with free 30S ribosomal subunits (but not with 30S subunits that are part of 70S ribosomes or polysomes). Required for efficient processing of 16S rRNA. May interact with the 5'-terminal helix region of 16S rRNA. This Leuconostoc mesenteroides subsp. mesenteroides (strain ATCC 8293 / DSM 20343 / BCRC 11652 / CCM 1803 / JCM 6124 / NCDO 523 / NBRC 100496 / NCIMB 8023 / NCTC 12954 / NRRL B-1118 / 37Y) protein is Ribosome-binding factor A.